The primary structure comprises 91 residues: Cell division topological specificity factor (91 aa).

Belongs to the MinE family.

Prevents the cell division inhibition by proteins MinC and MinD at internal division sites while permitting inhibition at polar sites. This ensures cell division at the proper site by restricting the formation of a division septum at the midpoint of the long axis of the cell. The polypeptide is Cell division topological specificity factor (Caldanaerobacter subterraneus subsp. tengcongensis (strain DSM 15242 / JCM 11007 / NBRC 100824 / MB4) (Thermoanaerobacter tengcongensis)).